Consider the following 117-residue polypeptide: NADH-ubiquinone oxidoreductase chain 3 (117 aa).

The next 3 helical transmembrane spans lie at 1 to 21, 57 to 77, and 86 to 106; these read MLML…VMML, FFLI…LLPM, and LMNW…GLYH.

It belongs to the complex I subunit 3 family.

The protein localises to the mitochondrion membrane. The catalysed reaction is a ubiquinone + NADH + 5 H(+)(in) = a ubiquinol + NAD(+) + 4 H(+)(out). Functionally, core subunit of the mitochondrial membrane respiratory chain NADH dehydrogenase (Complex I) that is believed to belong to the minimal assembly required for catalysis. Complex I functions in the transfer of electrons from NADH to the respiratory chain. The immediate electron acceptor for the enzyme is believed to be ubiquinone. This chain is NADH-ubiquinone oxidoreductase chain 3 (ND3), found in Anopheles quadrimaculatus (Common malaria mosquito).